The sequence spans 229 residues: Large ribosomal subunit protein uL1 (229 aa).

It belongs to the universal ribosomal protein uL1 family. In terms of assembly, part of the 50S ribosomal subunit.

In terms of biological role, binds directly to 23S rRNA. The L1 stalk is quite mobile in the ribosome, and is involved in E site tRNA release. Functionally, protein L1 is also a translational repressor protein, it controls the translation of the L11 operon by binding to its mRNA. The chain is Large ribosomal subunit protein uL1 from Pasteurella multocida (strain Pm70).